We begin with the raw amino-acid sequence, 681 residues long: Envelope glycoprotein (681 aa).

The signal sequence occupies residues 1–18 (MKTIYFLISLILIQSIKT). The Extracellular portion of the chain corresponds to 19-648 (LPVLEIASNS…GLGGKWWTSD (630 aa)). A receptor-binding region spans residues 38–188 (SGTLQKTEDV…FSRQGQGYRH (151 aa)). Residues asparagine 94, asparagine 171, asparagine 190, asparagine 202, asparagine 207, asparagine 219, and asparagine 223 are each glycosylated (N-linked (GlcNAc...) asparagine; by host). Positions 223 to 428 (NQTCPPSLKP…PDSSPTTRPP (206 aa)) are disordered. 2 stretches are compositionally biased toward polar residues: residues 236–260 (PTVT…MNPS) and 278–315 (PHTT…TNPS). The interval 277–455 (GPHTTLNVVT…PFLDGLINTE (179 aa)) is mucin-like region. N-linked (GlcNAc...) asparagine; by host glycosylation is found at asparagine 310, asparagine 323, asparagine 336, asparagine 350, asparagine 360, asparagine 364, asparagine 381, asparagine 397, asparagine 475, and asparagine 487. Residues 327-347 (PTTQPATLLNNTNTTPTYNTL) show a composition bias toward low complexity. Polar residues-rich tracts occupy residues 348–365 (KYNL…TNND) and 373–394 (SEQT…TTGQ). Positions 395 to 428 (DTNSTTNIIMTTSDITSKHPTNSSPDSSPTTRPP) are enriched in low complexity. Residues 529 to 549 (GLSWIPFFGPGIEGLYTAGLI) form a fusion peptide region. N-linked (GlcNAc...) asparagine; by host glycosylation is found at asparagine 564 and asparagine 619. A helical transmembrane segment spans residues 649–669 (WGVLTNLGILLLLSIAVLIAL). The Cytoplasmic segment spans residues 670 to 681 (SCICRIFTKYIG). S-palmitoyl cysteine; by host attachment occurs at residues cysteine 671 and cysteine 673.

This sequence belongs to the filoviruses glycoprotein family. In terms of assembly, homotrimer; each monomer consists of a GP1 and a GP2 subunit linked by disulfide bonds. The resulting peplomers (GP1,2) protrude from the virus surface as spikes. GP1,2 interacts with human CD209 and CLEC4M (collectively referred to as DC-SIGN(R)). Asialoglycoprotein receptor (ASGP-R) may be a liver-specific receptor for GP1,2. Members of the Tyro3 receptor tyrosine kinase family may be cell entry factors interacting with GP1,2. Post-translationally, N-glycosylated. In terms of processing, O-glycosylated in the mucin-like region. Specific enzymatic cleavages in vivo yield mature proteins. The precursor is processed into GP1 and GP2 by host cell furin in the trans Golgi, and maybe by other host proteases, to yield the mature GP1 and GP2 proteins. The cleavage site corresponds to the furin optimal cleavage sequence [KR]-X-[KR]-R. Post-translationally, GP1 is phosphorylated on serine residues between residues 260 and 273.

It localises to the virion membrane. The protein resides in the host cell membrane. In terms of biological role, GP1 is responsible for binding to the receptor(s) on target cells. Interacts with CD209/DC-SIGN and CLEC4M/DC-SIGNR which act as cofactors for virus entry into the host cell. Binding to CD209 and CLEC4M, which are respectively found on dendritic cells (DCs), and on endothelial cells of liver sinusoids and lymph node sinuses, facilitate infection of macrophages and endothelial cells. These interactions not only facilitate virus cell entry, but also allow capture of viral particles by DCs and subsequent transmission to susceptible cells without DCs infection (trans infection). Its function is as follows. GP2 acts as a class I viral fusion protein. Under the current model, the protein has at least 3 conformational states: pre-fusion native state, pre-hairpin intermediate state, and post-fusion hairpin state. During viral and target cell membrane fusion, the coiled coil regions (heptad repeats) assume a trimer-of-hairpins structure, positioning the fusion peptide in close proximity to the C-terminal region of the ectodomain. The formation of this structure appears to drive apposition and subsequent fusion of viral and target cell membranes. Responsible for penetration of the virus into the cell cytoplasm by mediating the fusion of the membrane of the endocytosed virus particle with the endosomal membrane. Low pH in endosomes induces an irreversible conformational change in GP2, releasing the fusion hydrophobic peptide. The chain is Envelope glycoprotein (GP) from Chlorocebus aethiops (Green monkey).